The chain runs to 1103 residues: PH, RCC1 and FYVE domains-containing protein 1 (1103 aa).

Residues 22–123 enclose the PH domain; sequence KKGTQLLKYG…IWIGGLKTLI (102 aa). The tract at residues 144-233 is disordered; it reads DASRELTSSS…SSSHGSAADD (90 aa). 2 stretches are compositionally biased toward low complexity: residues 151-169 and 217-231; these read SSSP…SSPG and SVSS…GSAA. RCC1 repeat units lie at residues 237–298, 299–351, 353–406, 407–458, 471–522, 524–574, and 575–626; these read LGDV…FVTR, QGEI…AVTL, GELY…LITS, YGRL…AVVE, SGKL…GLTT, GQVF…ALTS, and RNEV…AICL. The FYVE-type zinc finger occupies 632-694; that stretch reads GAEQSQCSTC…VCDSCYVKLS (63 aa). Zn(2+) is bound by residues cysteine 638, cysteine 641, cysteine 654, cysteine 657, cysteine 662, cysteine 665, cysteine 686, and cysteine 689. The tract at residues 783 to 818 is disordered; it reads ATPKLAQAPSGISSRSVSPFSRRSSPPRSATPMPST. Low complexity predominate over residues 791 to 818; sequence PSGISSRSVSPFSRRSSPPRSATPMPST. Residues 828–904 adopt a coiled-coil conformation; sequence ADNMKKTNEI…IAQLKDVAEK (77 aa). The span at 962–979 shows a compositional bias: polar residues; the sequence is NLQSPKQTPRASERNSNA. The segment at 962 to 988 is disordered; the sequence is NLQSPKQTPRASERNSNAYPADPRLSS. The 56-residue stretch at 1023–1078 folds into the BRX domain; that stretch reads AEWIEQYEPGVYITLVALHDGTRDLRRVRFSRRRFGEHQAETWWSENREKVYEKYN. The tract at residues 1079-1103 is disordered; sequence VRVSEKSTASQTHRDRDEEEEDIPH.

In terms of tissue distribution, mostly expressed in flowers, and, to a lower extent, in stems, leaves, siliques, seeds.

Functionally, binds to phosphatidic acid and to phosphoinositides such as PtdIns3P, PtdIns(3,4)P(2), PtdIns(3,4,5)P(3) and PtdIns(4,5)P(2). Catalyzes guanine nucleotide exchange on specific Rab proteins. This chain is PH, RCC1 and FYVE domains-containing protein 1, found in Arabidopsis thaliana (Mouse-ear cress).